The chain runs to 2035 residues: Envoplakin (2035 aa).

Residues 1-27 (MFKGLSKGSQGKGSPKGSPAKGSPKGS) are compositionally biased toward low complexity. Disordered regions lie at residues 1–37 (MFKGLSKGSQGKGSPKGSPAKGSPKGSPNKHNRAATQ) and 63–84 (KLQQDRQNGEQNQALQHQQETG). Positions 1-841 (MFKGLSKGSQ…LEPALAVSAP (841 aa)) are globular 1. Residues 12 to 28 (KGSPKGSPAKGSPKGSP) form a 4 X 4 AA tandem repeats of K-G-S-P region. The segment covering 71 to 84 (GEQNQALQHQQETG) has biased composition (polar residues). One copy of the Spectrin repeat lies at 229–330 (YTHLQGCTKQ…LCICQESQLQ (102 aa)). Residues 400 to 419 (QEVAPLPQRRNPSKQPLHVD) form a disordered region. The SH3 domain occupies 413–470 (KQPLHVDSICDWDSGEVQLLRGERYTLKDNADPYTWLVQGPGGETKSAPAACLCIPAP). A coiled-coil region spans residues 842 to 1664 (KRLRVISLQE…EKERTLRDLH (823 aa)). The segment at 842–1674 (KRLRVISLQE…TKVSREELNQ (833 aa)) is central fibrous rod domain. The Plectin 1 repeat unit spans residues 1186-1227 (KQKPKVQLQERVSEIFQVLPETEQEIRRLRAQLQETGSKKSG). Position 1576 is a phosphoserine (S1576). Basic and acidic residues predominate over residues 1607 to 1631 (KQQKARQLQEEGRLLSQKTESERQK). Residues 1607-1637 (KQQKARQLQEEGRLLSQKTESERQKAAQRSQ) are disordered. Residues 1675 to 2035 (ETQTRETNLS…SPTLPRSCVR (361 aa)) form a globular 2 region. The stretch at 1679–1714 (RETNLSTKICILEPETGNDMSPYEAYKRGVIDRGQY) is one Plectin 2 repeat. S1800 carries the phosphoserine modification. 5 Plectin repeats span residues 1819–1856 (FGLTEDSFPIAGIYDTTTDNKCSIKAAVAKNMLDPITG), 1857–1894 (QKLLEAQAATGGIVDLLSRERYSVHKAVERGLIENTST), 1895–1932 (QRLLNAQKAFTGIEDPVTRKRLSVGEAIQKGWMPQESV), 1933–1970 (LPHLLVQHLTGGLIDPKRTGRIPVPQAVLCGMISEDLG), and 1971–2008 (QLLQDESGYEKDLTDPITKERLSYKEAMGRCRKDPLSG). S2026 is subject to Phosphoserine.

Belongs to the plakin or cytolinker family. As to quaternary structure, may form a homodimer or a heterodimer with PPL.

It is found in the cell junction. It localises to the desmosome. The protein resides in the cornified envelope. The protein localises to the cytoplasm. Its subcellular location is the cytoskeleton. Functionally, component of the cornified envelope of keratinocytes. May link the cornified envelope to desmosomes and intermediate filaments. In Mus musculus (Mouse), this protein is Envoplakin (Evpl).